Here is a 512-residue protein sequence, read N- to C-terminus: GMP synthase [glutamine-hydrolyzing] (512 aa).

The Glutamine amidotransferase type-1 domain maps to 7–197; sequence TIIVLDFGSQ…VFGVCGCSEG (191 aa). Residue C84 is the Nucleophile of the active site. Residues H171 and E173 contribute to the active site. The 190-residue stretch at 198-387 folds into the GMPS ATP-PPase domain; it reads WNMENFIEVE…LGIPDEIVWR (190 aa). Residue 225 to 231 coordinates ATP; the sequence is SGGVDSS.

In terms of assembly, homodimer.

The catalysed reaction is XMP + L-glutamine + ATP + H2O = GMP + L-glutamate + AMP + diphosphate + 2 H(+). It participates in purine metabolism; GMP biosynthesis; GMP from XMP (L-Gln route): step 1/1. Catalyzes the synthesis of GMP from XMP. The protein is GMP synthase [glutamine-hydrolyzing] of Bacillus mycoides (strain KBAB4) (Bacillus weihenstephanensis).